The primary structure comprises 122 residues: Basic phospholipase A2 10 (122 aa).

7 cysteine pairs are disulfide-bonded: C26/C114, C28/C43, C42/C94, C48/C122, C49/C87, C56/C80, and C74/C85. Residues Y27, G29, and G31 each contribute to the Ca(2+) site. The active site involves H46. D47 is a binding site for Ca(2+). D88 is an active-site residue.

Ca(2+) serves as cofactor. Expressed by the venom gland.

The protein localises to the secreted. It catalyses the reaction a 1,2-diacyl-sn-glycero-3-phosphocholine + H2O = a 1-acyl-sn-glycero-3-phosphocholine + a fatty acid + H(+). Its activity is regulated as follows. Inhibited by chemical modifications mediated by p-BPB, anhydrous acetic acid and NBSF. Functionally, snake venom phospholipase A2 (PLA2) that has a strong dose-dependent anticoagulant effect. In vivo, intramuscular and intervenal injection causes muscle necrosis. Induces moderate edema in the mouse foot pad. PLA2 catalyzes the calcium-dependent hydrolysis of the 2-acyl groups in 3-sn-phosphoglycerides. This is Basic phospholipase A2 10 from Crotalus durissus cumanensis (South American rattlesnake).